The chain runs to 412 residues: Eukaryotic initiation factor 4A-2 (412 aa).

Ala2 bears the N-acetylalanine mark. The Q motif motif lies at 39-67 (ESFDAMGLQENLLRGIYAYGFEKPSAIQQ). One can recognise a Helicase ATP-binding domain in the interval 70 to 240 (IVPFCKGLDV…RKFMSKPVRI (171 aa)). 83–90 (AQSGTGKT) lines the ATP pocket. Thr145 is modified (phosphothreonine). Positions 188–191 (DEAD) match the DEAD box motif. In terms of domain architecture, Helicase C-terminal spans 251 to 412 (GIKQFYVNVE…ELPSNVADLL (162 aa)).

This sequence belongs to the DEAD box helicase family. eIF4A subfamily. EIF4F is a multi-subunit complex, the composition of which varies with external and internal environmental conditions. It is composed of at least EIF4A, EIF4E and EIF4G. Ubiquitous. Preferentially expressed in flowers, young leaves and roots.

Its subcellular location is the cytoplasm. The catalysed reaction is ATP + H2O = ADP + phosphate + H(+). Functionally, ATP-dependent RNA helicase which is a subunit of the eIF4F complex involved in cap recognition and is required for mRNA binding to ribosome. In the current model of translation initiation, eIF4A unwinds RNA secondary structures in the 5'-UTR of mRNAs which is necessary to allow efficient binding of the small ribosomal subunit, and subsequent scanning for the initiator codon. In Arabidopsis thaliana (Mouse-ear cress), this protein is Eukaryotic initiation factor 4A-2 (TIF4A-2).